A 254-amino-acid polypeptide reads, in one-letter code: Anamorsin homolog (254 aa).

Residues 4 to 132 (VQENNHVLYI…EIGSAAKLSL (129 aa)) form an N-terminal SAM-like domain region. Residues 132–167 (LGGNKAKVAAVWKLDVDDDDDERIDEDELLDEEDKV) are linker. Residues Cys177, Cys186, Cys189, and Cys191 each contribute to the [2Fe-2S] cluster site. The interval 177–191 (CGTTGKRKACKDCSC) is fe-S binding site A. [4Fe-4S] cluster contacts are provided by Cys215, Cys218, Cys226, and Cys229. Short sequence motifs (cx2C motif) lie at residues 215–218 (CGSC) and 226–229 (CATC). Positions 215–229 (CGSCYLGDAFRCATC) are fe-S binding site B.

Belongs to the anamorsin family. In terms of assembly, monomer. [2Fe-2S] cluster serves as cofactor. [4Fe-4S] cluster is required as a cofactor.

The protein resides in the cytoplasm. Its subcellular location is the mitochondrion intermembrane space. In terms of biological role, component of the cytosolic iron-sulfur (Fe-S) protein assembly (CIA) machinery. Required for the maturation of extramitochondrial Fe-S proteins. Part of an electron transfer chain functioning in an early step of cytosolic Fe-S biogenesis, facilitating the de novo assembly of a [4Fe-4S] cluster on the cytosolic Fe-S scaffold complex. Electrons are transferred from NADPH via a FAD- and FMN-containing diflavin oxidoreductase. Together with the diflavin oxidoreductase, also required for the assembly of the diferric tyrosyl radical cofactor of ribonucleotide reductase (RNR), probably by providing electrons for reduction during radical cofactor maturation in the catalytic small subunit. This chain is Anamorsin homolog, found in Aedes aegypti (Yellowfever mosquito).